The primary structure comprises 207 residues: Octanoyltransferase (207 aa).

The BPL/LPL catalytic domain maps to 27–203; the sequence is ADTEDELWVV…HLETQLTPKA (177 aa). Residues 66 to 73, 133 to 135, and 146 to 148 contribute to the substrate site; these read RGGQITYH, SLG, and GLA. Catalysis depends on Cys164, which acts as the Acyl-thioester intermediate.

It belongs to the LipB family.

The protein localises to the cytoplasm. The enzyme catalyses octanoyl-[ACP] + L-lysyl-[protein] = N(6)-octanoyl-L-lysyl-[protein] + holo-[ACP] + H(+). It functions in the pathway protein modification; protein lipoylation via endogenous pathway; protein N(6)-(lipoyl)lysine from octanoyl-[acyl-carrier-protein]: step 1/2. Functionally, catalyzes the transfer of endogenously produced octanoic acid from octanoyl-acyl-carrier-protein onto the lipoyl domains of lipoate-dependent enzymes. Lipoyl-ACP can also act as a substrate although octanoyl-ACP is likely to be the physiological substrate. The polypeptide is Octanoyltransferase (Neisseria gonorrhoeae (strain ATCC 700825 / FA 1090)).